Reading from the N-terminus, the 110-residue chain is Vacuolar ATPase assembly integral membrane protein VMA21 (110 aa).

The disordered stretch occupies residues 1 to 28; it reads MTTRRIIGQDGEEKTYLDVDPRGPPGPS. The Cytoplasmic segment spans residues 1-44; that stretch reads MTTRRIIGQDGEEKTYLDVDPRGPPGPSNISPAVPASVIWKLMS. Positions 11-21 are enriched in basic and acidic residues; it reads GEEKTYLDVDP. A helical membrane pass occupies residues 45-65; that stretch reads FTFAMITLPIGTYFFTVNYVF. Residues 66-71 lie on the Lumenal side of the membrane; the sequence is GGNATY. Residues 72 to 92 traverse the membrane as a helical segment; sequence AGALAAIMANVVLIAYVIMAF. Over 93-110 the chain is Cytoplasmic; it reads KDDQAEQAEDAREAKKEL. Residues 107–110 carry the Prevents secretion from ER motif; that stretch reads KKEL.

It belongs to the VMA21 family.

It localises to the endoplasmic reticulum membrane. The protein resides in the endoplasmic reticulum-Golgi intermediate compartment membrane. It is found in the cytoplasmic vesicle. Its subcellular location is the COPII-coated vesicle membrane. In terms of biological role, required for the assembly of the V0 complex of the vacuolar ATPase (V-ATPase) in the endoplasmic reticulum. This Phaeosphaeria nodorum (strain SN15 / ATCC MYA-4574 / FGSC 10173) (Glume blotch fungus) protein is Vacuolar ATPase assembly integral membrane protein VMA21.